Consider the following 153-residue polypeptide: UPAR/Ly6 domain-containing protein cold (153 aa).

Residues 1-25 (MKSWEIAVVLVAAVYLCSQVNFVAG) form the signal peptide. At 26–130 (LECYVCSNQT…FVISGAPSRQ (105 aa)) the chain is on the extracellular side. Cystine bridges form between Cys28–Cys55, Cys31–Cys41, Cys48–Cys81, Cys87–Cys112, Cys99–Cys109, and Cys113–Cys118. A glycan (N-linked (GlcNAc...) asparagine) is linked at Asn33. Ser124 is lipidated: GPI-anchor amidated serine. Residues 125-153 (GAPSRQGYGVCLTLLTALLGLGSWLIPRS) constitute a propeptide, removed in mature form. Residues 131 to 151 (GYGVCLTLLTALLGLGSWLIP) traverse the membrane as a helical segment. Over 152-153 (RS) the chain is Cytoplasmic.

Belongs to the snake toxin-like superfamily. GPI-anchored. As to expression, expressed in all tissues that form septate junctions, including hindgut, trachea, epidermis and dorsal pouch. Expressed in subperineurial glial cells that form the hemolymph-brain barrier of the central nervous system.

Its subcellular location is the endosome membrane. It is found in the endoplasmic reticulum membrane. The protein resides in the cell membrane. The protein localises to the cell junction. It localises to the septate junction. Functionally, required for septate junction assembly, possibly by organizing the preassembly and transport of septate junction proteins such as dlg1/disks large 1 and Nrx-IV/Neurexin-IV. Involved in paracellular barrier functions of trachea, hindgut and salivary gland mediated by epithelial cell septate junctions. Involved in paracellular barrier functions of the hemolymph-brain barrier (insect blood-brain barrier) mediated by glial cell septate junctions. Required for maintenance of septate junctions in imaginal disk epithelial cells. Involved in the epithelial cell wound-healing response. Directly or indirectly mediates cell-cell adhesion during septate junction formation. The protein is UPAR/Ly6 domain-containing protein cold of Drosophila melanogaster (Fruit fly).